The sequence spans 312 residues: Malate dehydrogenase (312 aa).

Residues 12–17 and aspartate 36 contribute to the NAD(+) site; that span reads GAGFTG. Substrate is bound by residues arginine 87 and arginine 93. NAD(+) contacts are provided by residues asparagine 100 and 123-125; that span reads LTN. Asparagine 125 provides a ligand contact to substrate. Serine 149 carries the post-translational modification Phosphoserine. Substrate is bound at residue arginine 156. The active-site Proton acceptor is histidine 180.

The protein belongs to the LDH/MDH superfamily. MDH type 3 family.

It catalyses the reaction (S)-malate + NAD(+) = oxaloacetate + NADH + H(+). In terms of biological role, catalyzes the reversible oxidation of malate to oxaloacetate. This is Malate dehydrogenase from Bacillus pumilus (strain SAFR-032).